Consider the following 439-residue polypeptide: Cysteine--tRNA ligase (439 aa).

Cys-28 is a Zn(2+) binding site. A 'HIGH' region motif is present at residues 30–40 (ITVYDLCHIGH). 3 residues coordinate Zn(2+): Cys-209, His-234, and Glu-238. The 'KMSKS' region motif lies at 266–270 (KMSKS). ATP is bound at residue Lys-269.

This sequence belongs to the class-I aminoacyl-tRNA synthetase family. In terms of assembly, monomer. It depends on Zn(2+) as a cofactor.

It is found in the cytoplasm. It carries out the reaction tRNA(Cys) + L-cysteine + ATP = L-cysteinyl-tRNA(Cys) + AMP + diphosphate. This Shigella boydii serotype 4 (strain Sb227) protein is Cysteine--tRNA ligase.